A 505-amino-acid chain; its full sequence is ATP synthase subunit alpha (505 aa).

An ATP-binding site is contributed by 170-177 (GDRQTGKT).

The protein belongs to the ATPase alpha/beta chains family. F-type ATPases have 2 components, CF(1) - the catalytic core - and CF(0) - the membrane proton channel. CF(1) has five subunits: alpha(3), beta(3), gamma(1), delta(1), epsilon(1). CF(0) has four main subunits: a(1), b(1), b'(1) and c(9-12).

The protein localises to the cellular thylakoid membrane. It carries out the reaction ATP + H2O + 4 H(+)(in) = ADP + phosphate + 5 H(+)(out). Produces ATP from ADP in the presence of a proton gradient across the membrane. The alpha chain is a regulatory subunit. This chain is ATP synthase subunit alpha, found in Synechococcus sp. (strain RCC307).